The following is a 109-amino-acid chain: Death-associated protein-like 1 homolog (109 aa).

Disordered regions lie at residues 1 to 51 (MVQL…KPRS) and 76 to 100 (FPET…ISRI). A compositionally biased stretch (basic and acidic residues) spans 31–50 (KSADENANVEKETRKTDKPR).

This sequence belongs to the DAP-DAPL1 family. Associates with ribosomes; preventing translation. Interacts with eiF5a (eif5a and eif5a2); preventing translation.

Functionally, ribosome-binding protein that promotes ribosome hibernation, a process during which ribosomes are stabilized in an inactive state and preserved from proteasomal degradation. Acts via its association with eiF5a (eif5a and eif5a2) at the polypeptide exit tunnel of the ribosome, preventing mRNA translation. Plays a key role in ribosome hibernation in the mature egg by preventing mRNA translation, leading to ribosome inactivation. Ribosomes, which are produced in large quantities during oogenesis, are stored and translationally repressed in the egg and early embryo. The protein is Death-associated protein-like 1 homolog of Danio rerio (Zebrafish).